A 252-amino-acid polypeptide reads, in one-letter code: 5'-nucleotidase SurE (252 aa).

Residues aspartate 8, aspartate 9, serine 39, and asparagine 95 each coordinate a divalent metal cation.

This sequence belongs to the SurE nucleotidase family. A divalent metal cation serves as cofactor.

The protein localises to the cytoplasm. The catalysed reaction is a ribonucleoside 5'-phosphate + H2O = a ribonucleoside + phosphate. Nucleotidase that shows phosphatase activity on nucleoside 5'-monophosphates. The protein is 5'-nucleotidase SurE of Clostridium botulinum (strain 657 / Type Ba4).